The primary structure comprises 319 residues: Acetyl-coenzyme A carboxylase carboxyl transferase subunit alpha (319 aa).

A CoA carboxyltransferase C-terminal domain is found at 39–293 (KLEKKVDRMR…HEAIARQLKE (255 aa)).

This sequence belongs to the AccA family. As to quaternary structure, acetyl-CoA carboxylase is a heterohexamer composed of biotin carboxyl carrier protein (AccB), biotin carboxylase (AccC) and two subunits each of ACCase subunit alpha (AccA) and ACCase subunit beta (AccD).

It localises to the cytoplasm. The enzyme catalyses N(6)-carboxybiotinyl-L-lysyl-[protein] + acetyl-CoA = N(6)-biotinyl-L-lysyl-[protein] + malonyl-CoA. The protein operates within lipid metabolism; malonyl-CoA biosynthesis; malonyl-CoA from acetyl-CoA: step 1/1. Functionally, component of the acetyl coenzyme A carboxylase (ACC) complex. First, biotin carboxylase catalyzes the carboxylation of biotin on its carrier protein (BCCP) and then the CO(2) group is transferred by the carboxyltransferase to acetyl-CoA to form malonyl-CoA. The protein is Acetyl-coenzyme A carboxylase carboxyl transferase subunit alpha of Geobacter sulfurreducens (strain ATCC 51573 / DSM 12127 / PCA).